A 292-amino-acid polypeptide reads, in one-letter code: ATP phosphoribosyltransferase (292 aa).

It belongs to the ATP phosphoribosyltransferase family. Long subfamily. The cofactor is Mg(2+).

The protein resides in the cytoplasm. The catalysed reaction is 1-(5-phospho-beta-D-ribosyl)-ATP + diphosphate = 5-phospho-alpha-D-ribose 1-diphosphate + ATP. The protein operates within amino-acid biosynthesis; L-histidine biosynthesis; L-histidine from 5-phospho-alpha-D-ribose 1-diphosphate: step 1/9. Feedback inhibited by histidine. Catalyzes the condensation of ATP and 5-phosphoribose 1-diphosphate to form N'-(5'-phosphoribosyl)-ATP (PR-ATP). Has a crucial role in the pathway because the rate of histidine biosynthesis seems to be controlled primarily by regulation of HisG enzymatic activity. This is ATP phosphoribosyltransferase from Desulfatibacillum aliphaticivorans.